Reading from the N-terminus, the 65-residue chain is UPF0370 protein Ent638_2968 (65 aa).

Residues 4–24 form a helical membrane-spanning segment; the sequence is LSKYWWILVLVFLVGVLLNVI. Residues 39-65 form a disordered region; sequence KPELPPHRDFNDKWDDDDNWPKKDQKK. Basic and acidic residues predominate over residues 42–65; that stretch reads LPPHRDFNDKWDDDDNWPKKDQKK.

This sequence belongs to the UPF0370 family.

The protein localises to the cell membrane. This is UPF0370 protein Ent638_2968 from Enterobacter sp. (strain 638).